Consider the following 396-residue polypeptide: Serine/threonine-protein kinase GRIK1 (396 aa).

Residues 22–65 are disordered; it reads ERSRHSPNPYDDDTYSHDSGETSNPGGDDEEGEEEEEVEELSRS. A compositionally biased stretch (acidic residues) spans 48-60; sequence GDDEEGEEEEEVE. The Protein kinase domain maps to 108 to 369; that stretch reads FVRERKIGSG…LKAVAEHPWI (262 aa). Residues 114–122 and lysine 137 contribute to the ATP site; that span reads IGSGSYGKV. The residue at position 154 (threonine 154) is a Phosphothreonine; by autocatalysis. Catalysis depends on aspartate 239, which acts as the Proton acceptor. Serine 261 carries the post-translational modification Phosphoserine; by KIN10.

The protein belongs to the protein kinase superfamily. Ser/Thr protein kinase family. In terms of assembly, associates with the SNF1-related protein kinase (SnRK) complex. Interacts with AL1, a geminivirus (TGMV) protein essential for viral replication. In terms of tissue distribution, expressed in shoot apical meristem, leaf primordium and emerging petiole (at protein level).

Its subcellular location is the cytoplasm. It localises to the nucleus. It carries out the reaction L-seryl-[protein] + ATP = O-phospho-L-seryl-[protein] + ADP + H(+). The enzyme catalyses L-threonyl-[protein] + ATP = O-phospho-L-threonyl-[protein] + ADP + H(+). With respect to regulation, activated when autophosphorylated at Thr-154 and inactivated when phosphorylated at Ser-261 by SnRK1.1/KIN10. In terms of biological role, activates SnRK1.1/KIN10 and SnRK1.2/KIN11 by phosphorylation of their activation-loop 'Thr-198' and 'Thr-176', respectively. Required for the regulation by SnRK1 kinases of the transcription of a large set of genes, the modification the activity of metabolic enzymes, and the control of various nutrient-responsive cellular developmental processes. The chain is Serine/threonine-protein kinase GRIK1 (GRIK1) from Arabidopsis thaliana (Mouse-ear cress).